Reading from the N-terminus, the 158-residue chain is Pathogenesis-related protein 1 (158 aa).

This sequence belongs to the BetVI family.

The protein localises to the cytoplasm. This chain is Pathogenesis-related protein 1 (PR1), found in Asparagus officinalis (Garden asparagus).